The following is a 575-amino-acid chain: Carboxylesterase 5A (575 aa).

The signal sequence occupies residues 1–20; that stretch reads MSGNWVHPGQILIWAIWVLA. An intrachain disulfide couples Cys-94 to Cys-121. The active-site Acyl-ester intermediate is Ser-226. N-linked (GlcNAc...) asparagine glycosylation occurs at Asn-281. The active-site Charge relay system is Glu-345. Asn-363 carries N-linked (GlcNAc...) asparagine glycosylation. His-454 functions as the Charge relay system in the catalytic mechanism. Residues Asn-513 and Asn-524 are each glycosylated (N-linked (GlcNAc...) asparagine).

This sequence belongs to the type-B carboxylesterase/lipase family. N-glycosylated.

It is found in the secreted. The catalysed reaction is a carboxylic ester + H2O = an alcohol + a carboxylate + H(+). Functionally, involved in the detoxification of xenobiotics and in the activation of ester and amide prodrugs. This Homo sapiens (Human) protein is Carboxylesterase 5A (CES5A).